The following is a 287-amino-acid chain: Acetylglutamate kinase (287 aa).

Residues 70 to 71, arginine 92, and asparagine 184 contribute to the substrate site; that span reads GG.

It belongs to the acetylglutamate kinase family. ArgB subfamily.

The protein localises to the cytoplasm. It catalyses the reaction N-acetyl-L-glutamate + ATP = N-acetyl-L-glutamyl 5-phosphate + ADP. It participates in amino-acid biosynthesis; L-arginine biosynthesis; N(2)-acetyl-L-ornithine from L-glutamate: step 2/4. Its function is as follows. Catalyzes the ATP-dependent phosphorylation of N-acetyl-L-glutamate. This chain is Acetylglutamate kinase, found in Ruegeria pomeroyi (strain ATCC 700808 / DSM 15171 / DSS-3) (Silicibacter pomeroyi).